The sequence spans 913 residues: Glutamate receptor ionotropic, kainate 2 (913 aa).

Over 1–566 (MCAGTMKIIS…VFSFLNPLSP (566 aa)) the chain is Extracellular. Asparagine 72, asparagine 78, asparagine 280, asparagine 383, asparagine 417, asparagine 428, and asparagine 435 each carry an N-linked (GlcNAc...) asparagine glycan. A disulfide bridge connects residues cysteine 101 and cysteine 352. L-glutamate-binding residues include proline 521, alanine 523, and arginine 528. Asparagine 551 carries an N-linked (GlcNAc...) asparagine glycan. The chain crosses the membrane as a helical span at residues 567 to 587 (DIWMYILLAYLGVSCVLFVIA). Residues 588–643 (RFSPYEWYNPHPCNPDSDVVENNFTLLNSFWFGVGALMQQGSELMPKALSTRIVGG) are Cytoplasmic-facing. The helical transmembrane segment at 644–664 (IWWFFTLIIISSYTANLAAFL) threads the bilayer. Topologically, residues 665–824 (TVERMESPID…KEASALGVQN (160 aa)) are extracellular. The L-glutamate site is built by alanine 694, threonine 695, and glutamate 743. An intrachain disulfide couples cysteine 755 to cysteine 809. An N-linked (GlcNAc...) asparagine glycan is attached at asparagine 756. Residues 825–845 (IGGIFIVLAAGLVLSVFVAVG) traverse the membrane as a helical segment. At 846–913 (EFLYKSKKNA…RRLPGKETMA (68 aa)) the chain is on the cytoplasmic side.

This sequence belongs to the glutamate-gated ion channel (TC 1.A.10.1) family. GRIK2 subfamily. As to quaternary structure, homotetramer and heterotetramer with GRIK5. Tetramers may be formed by the dimerization of dimers.

The protein resides in the cell membrane. The protein localises to the postsynaptic cell membrane. The catalysed reaction is Ca(2+)(in) = Ca(2+)(out). The enzyme catalyses Na(+)(in) = Na(+)(out). With respect to regulation, cold receptor activity activated by temperatures between 10-19 degrees Celsius. Its function is as follows. Ionotropic glutamate receptor that functions as a cation-permeable ligand-gated ion channel, gated by L-glutamate and the glutamatergic agonist kainic acid. L-glutamate acts as an excitatory neurotransmitter at many synapses in the central nervous system. Binding of the excitatory neurotransmitter L-glutamate induces a conformation change, leading to the opening of the cation channel, and thereby converts the chemical signal to an electrical impulse. The receptor then desensitizes rapidly and enters a transient inactive state, characterized by the presence of bound agonist. In terms of biological role, independent of its ionotropic glutamate receptor activity, acts as a thermoreceptor conferring sensitivity to cold temperatures. Functions in dorsal root ganglion neurons. The sequence is that of Glutamate receptor ionotropic, kainate 2 (grik2) from Xenopus laevis (African clawed frog).